The following is a 286-amino-acid chain: Bifunctional protein FolD (286 aa).

Residues 165–167, serine 190, and valine 231 contribute to the NADP(+) site; that span reads GRS.

This sequence belongs to the tetrahydrofolate dehydrogenase/cyclohydrolase family. Homodimer.

It catalyses the reaction (6R)-5,10-methylene-5,6,7,8-tetrahydrofolate + NADP(+) = (6R)-5,10-methenyltetrahydrofolate + NADPH. The enzyme catalyses (6R)-5,10-methenyltetrahydrofolate + H2O = (6R)-10-formyltetrahydrofolate + H(+). It participates in one-carbon metabolism; tetrahydrofolate interconversion. Functionally, catalyzes the oxidation of 5,10-methylenetetrahydrofolate to 5,10-methenyltetrahydrofolate and then the hydrolysis of 5,10-methenyltetrahydrofolate to 10-formyltetrahydrofolate. In Bacillus anthracis (strain A0248), this protein is Bifunctional protein FolD.